A 149-amino-acid chain; its full sequence is Limonene-1,2-epoxide hydrolase (149 aa).

The Proton donor role is filled by Asp-101. The Proton acceptor role is filled by Asp-132.

This sequence belongs to the limonene-1,2-epoxide hydrolase family. As to quaternary structure, monomer.

It catalyses the reaction limonene 1,2-epoxide + H2O = limonene-1,2-diol. Its pathway is terpene metabolism; (4R)-limonene degradation; (1S,4R)-1-hydroxylimonen-2-one from (4R)-limonene: step 2/3. Its function is as follows. Catalyzes the conversion of limonene-1,2-epoxide to limonene-1,2-diol. Can use both the (-) and (+) isomers of limonene-1,2-epoxide as substrates and also has some activity with 1-methylcyclohexene oxide, cyclohexene oxide and indene oxide as substrates. The protein is Limonene-1,2-epoxide hydrolase (limA) of Rhodococcus erythropolis (Arthrobacter picolinophilus).